A 316-amino-acid polypeptide reads, in one-letter code: Homoserine kinase (316 aa).

An ATP-binding site is contributed by 97-107 (PPARGLGSSAS).

It belongs to the GHMP kinase family. Homoserine kinase subfamily.

It is found in the cytoplasm. It carries out the reaction L-homoserine + ATP = O-phospho-L-homoserine + ADP + H(+). It functions in the pathway amino-acid biosynthesis; L-threonine biosynthesis; L-threonine from L-aspartate: step 4/5. Its function is as follows. Catalyzes the ATP-dependent phosphorylation of L-homoserine to L-homoserine phosphate. The polypeptide is Homoserine kinase (Prochlorococcus marinus (strain MIT 9313)).